The primary structure comprises 301 residues: Glycine--tRNA ligase alpha subunit (301 aa).

It belongs to the class-II aminoacyl-tRNA synthetase family. As to quaternary structure, tetramer of two alpha and two beta subunits.

Its subcellular location is the cytoplasm. It catalyses the reaction tRNA(Gly) + glycine + ATP = glycyl-tRNA(Gly) + AMP + diphosphate. This chain is Glycine--tRNA ligase alpha subunit, found in Alteromonas mediterranea (strain DSM 17117 / CIP 110805 / LMG 28347 / Deep ecotype).